Consider the following 101-residue polypeptide: Putative fatty acid-binding protein 5-like protein 3 (101 aa).

This sequence belongs to the calycin superfamily. Fatty-acid binding protein (FABP) family.

In terms of biological role, high specificity for fatty acids. The protein is Putative fatty acid-binding protein 5-like protein 3 (FABP5P3) of Homo sapiens (Human).